The primary structure comprises 684 residues: Multisite-specific tRNA:(cytosine-C(5))-methyltransferase (684 aa).

The segment covering 1-12 (MARRKNFKKGNK) has biased composition (basic residues). Residues 1-24 (MARRKNFKKGNKKTFGARDDSRAQ) are disordered. Residues 173–179 (CAAPGSK), D202, D229, and D257 contribute to the S-adenosyl-L-methionine site. The active-site Nucleophile is the C310. T426 is subject to Phosphothreonine. A Phosphoserine modification is found at S431. Positions 650–684 (KATPSAEEKEKEKETTESPAETTTGTSTEAPSAAN) are disordered. A compositionally biased stretch (basic and acidic residues) spans 655-665 (AEEKEKEKETT). The segment covering 666-684 (ESPAETTTGTSTEAPSAAN) has biased composition (low complexity). S667 is modified (phosphoserine).

The protein belongs to the class I-like SAM-binding methyltransferase superfamily. RsmB/NOP family. TRM4 subfamily.

Its subcellular location is the nucleus. The protein localises to the nucleolus. It catalyses the reaction cytidine(34) in tRNA precursor + S-adenosyl-L-methionine = 5-methylcytidine(34) in tRNA precursor + S-adenosyl-L-homocysteine + H(+). The catalysed reaction is cytidine(40) in tRNA precursor + S-adenosyl-L-methionine = 5-methylcytidine(40) in tRNA precursor + S-adenosyl-L-homocysteine + H(+). It carries out the reaction cytidine(48) in tRNA + S-adenosyl-L-methionine = 5-methylcytidine(48) in tRNA + S-adenosyl-L-homocysteine + H(+). The enzyme catalyses cytidine(49) in tRNA + S-adenosyl-L-methionine = 5-methylcytidine(49) in tRNA + S-adenosyl-L-homocysteine + H(+). Functionally, methylates cytosine to m5C at several positions in different tRNAs and pre-tRNAs containing intron. Able to modify tRNAs at all four positions (34, 40, 48 and 49) at which m5C has been found in tRNAs. May be involved in ribosome biogenesis as its disruption leads to increased sensitivity to the antibiotic paromomycin. The protein is Multisite-specific tRNA:(cytosine-C(5))-methyltransferase (NCL1) of Saccharomyces cerevisiae (strain ATCC 204508 / S288c) (Baker's yeast).